The chain runs to 457 residues: ERV-H1 provirus ancestral Env polyprotein (457 aa).

The N-terminal stretch at 1 to 35 (MIFAGKAPSNTSTLMKFYSLILYSLLFSFPFLCHP) is a signal peptide. N-linked (GlcNAc...) asparagine glycosylation is found at N10 and N47. A CXXC motif is present at residues 64 to 67 (CWLC). 6 N-linked (GlcNAc...) asparagine glycosylation sites follow: N197, N222, N265, N283, N352, and N370. Positions 388–408 (VIPLIPLMFGLGLSASTIALS) are fusion peptide.

Belongs to the gamma type-C retroviral envelope protein family. HERV class-I H env subfamily. As to quaternary structure, the surface (SU) and transmembrane (TM) proteins form a heterodimer. SU and TM are attached by noncovalent interactions or by a labile interchain disulfide bond. In terms of processing, specific enzymatic cleavages in vivo yield the mature SU and TM proteins. Post-translationally, the CXXC motif is highly conserved across a broad range of retroviral envelope proteins. It is thought to participate in the formation of a labile disulfide bond possibly with the CX6CC motif present in the transmembrane protein.

It is found in the virion. Its function is as follows. Retroviral envelope proteins mediate receptor recognition and membrane fusion during early infection. Endogenous envelope proteins may have kept, lost or modified their original function during evolution. SU mediates receptor recognition. In terms of biological role, TM anchors the envelope heterodimer to the viral membrane through one transmembrane domain. The other hydrophobic domain, called fusion peptide, mediates fusion of the viral membrane with the target cell membrane. The polypeptide is ERV-H1 provirus ancestral Env polyprotein (Pan troglodytes (Chimpanzee)).